A 271-amino-acid polypeptide reads, in one-letter code: Hydroxyethylthiazole kinase (271 aa).

M50 is a substrate binding site. ATP is bound by residues R126 and T172. Substrate is bound at residue G199.

This sequence belongs to the Thz kinase family. It depends on Mg(2+) as a cofactor.

The catalysed reaction is 5-(2-hydroxyethyl)-4-methylthiazole + ATP = 4-methyl-5-(2-phosphooxyethyl)-thiazole + ADP + H(+). It participates in cofactor biosynthesis; thiamine diphosphate biosynthesis; 4-methyl-5-(2-phosphoethyl)-thiazole from 5-(2-hydroxyethyl)-4-methylthiazole: step 1/1. In terms of biological role, catalyzes the phosphorylation of the hydroxyl group of 4-methyl-5-beta-hydroxyethylthiazole (THZ). The sequence is that of Hydroxyethylthiazole kinase from Akkermansia muciniphila (strain ATCC BAA-835 / DSM 22959 / JCM 33894 / BCRC 81048 / CCUG 64013 / CIP 107961 / Muc).